Here is a 284-residue protein sequence, read N- to C-terminus: Protein-S-isoprenylcysteine O-methyltransferase (284 aa).

Over 1 to 16 (MAGCAARAPPGSEARL) the chain is Cytoplasmic. Residues 17–33 (SLATFLLGASVLALPLL) traverse the membrane as a helical segment. Over 34–41 (TRAGLQGR) the chain is Lumenal. A helical transmembrane segment spans residues 42–59 (TGLALYVAGLNALLLLLY). Topologically, residues 60–69 (RPPRYQIAIR) are cytoplasmic. Residues 70 to 87 (ACFLGFVFGCGTLLSFSQ) traverse the membrane as a helical segment. Residues 88 to 92 (SSWSH) lie on the Lumenal side of the membrane. A helical membrane pass occupies residues 93-112 (FGWYMCSLSLFHYSEYLVTA). Over 113–131 (VNNPKSLSLDSFLLNHSLE) the chain is Cytoplasmic. A helical membrane pass occupies residues 132-149 (YTVAALSSWLEFTLENIF). Topologically, residues 150–154 (WPELK) are lumenal. The chain crosses the membrane as a helical span at residues 155-174 (QITWLSVTGLLMVVFGECLR). The Cytoplasmic segment spans residues 175–212 (KAAMFTAGSNFNHVVQNEKSDTHTLVTSGVYAWFRHPS). Residues glutamine 190, 197–200 (HTLV), tyrosine 205, and 210–213 (HPSY) contribute to the S-adenosyl-L-methionine site. A helical transmembrane segment spans residues 213-228 (YVGWFYWSIGTQVMLC). Position 229 (asparagine 229) is a topological domain, lumenal. Residues 230 to 244 (PICGVSYALTVWRFF) form a helical membrane-spanning segment. The Cytoplasmic segment spans residues 245-284 (RDRTEEEEISLIHFFGEEYLEYKKRVPTGLPFIKGVKVDL). Arginine 247 provides a ligand contact to substrate. Glutamate 251 lines the S-adenosyl-L-methionine pocket.

This sequence belongs to the class VI-like SAM-binding methyltransferase superfamily. Isoprenylcysteine carboxyl methyltransferase family. In terms of tissue distribution, ubiquitously expressed. Expressed at higher levels in the cerebellum and putamen than in other brain regions. Abundant expression seen in the Purkinje cells and pontine neurons.

Its subcellular location is the endoplasmic reticulum membrane. It carries out the reaction [protein]-C-terminal S-[(2E,6E)-farnesyl]-L-cysteine + S-adenosyl-L-methionine = [protein]-C-terminal S-[(2E,6E)-farnesyl]-L-cysteine methyl ester + S-adenosyl-L-homocysteine. With respect to regulation, competitively inhibited by N-acetyl-S-trans,trans-farnesyl-l-cysteine (AFC). In terms of biological role, catalyzes the post-translational methylation of isoprenylated C-terminal cysteine residues. This Homo sapiens (Human) protein is Protein-S-isoprenylcysteine O-methyltransferase (ICMT).